The sequence spans 136 residues: MARTKQTARKSTGVKAPRKQLATKAARKSAPVSGGVKKPHKFRPGTVALREIRKYQKTTDLLIRKLPFQRLVRDIAMEMKNDIRFQSQAILALQEAAEAYLVGLFEDTNLCAIHARRVTIMTKDMQLARRIRGERF.

Positions 1–41 are disordered; the sequence is MARTKQTARKSTGVKAPRKQLATKAARKSAPVSGGVKKPHK.

It belongs to the histone H3 family. In terms of assembly, the nucleosome is a histone octamer containing two molecules each of H2A, H2B, H3 and H4 assembled in one H3-H4 heterotetramer and two H2A-H2B heterodimers. The octamer wraps approximately 147 bp of DNA. Post-translationally, acetylated. Acetylation occurs almost exclusively in the MAC.

The protein localises to the nucleus. It is found in the chromosome. In terms of biological role, macronuclear replacement variant which replaces conventional H3 in a subset of nucleosomes. Nucleosomes wrap and compact DNA into chromatin, limiting DNA accessibility to the cellular machineries which require DNA as a template. Histones thereby play a central role in transcription regulation, DNA repair, DNA replication and chromosomal stability. DNA accessibility is regulated via a complex set of post-translational modifications of histones, also called histone code, and nucleosome remodeling. Functions redundantly to H3.4. H3.3 deposition into chromatin is mainly transcription-associated and DNA replication-independent, but it can also enter a replication-coupled pathway. Although not essential for vegetative growth, minor H3 variants are required for producing viable conjugation progeny by affecting late developmental stages of conjugation. This Tetrahymena pyriformis protein is Histone H3.3.